The sequence spans 154 residues: MKLFVLCIFAMMATLAMSRSWTYVQPKFLNKAFEVALKEEIIVRWDRKLAKWLRVNGGPLSHVQKKALYFVNRRYMQTHWANYMLWINKKTDALGRTPVVGDYRRLGAEIGRRIDMVFFYKFLSGRNMIPKYMPYMEQINRMRAADIPVKYMGK.

An N-terminal signal peptide occupies residues 1-18; sequence MKLFVLCIFAMMATLAMS.

Homodimer. As to expression, sperm.

Dissolves the egg vitelline layer nonenzymatically during fertilization. It creates a hole of about 3 mu-m in diameter through which the sperm pass. The protein is Egg-lysin of Haliotis kamtschatkana (Pinto abalone).